A 330-amino-acid polypeptide reads, in one-letter code: Membrane progestin receptor gamma (330 aa).

Over 1 to 51 (MLSLKLPRLFRIDQVPQVFHEQGILFGYRHPQSSATACILSLFQMTNETLN) the chain is Cytoplasmic. The chain crosses the membrane as a helical span at residues 52–72 (IWTHLLPFWFFVWRFMTALYV). Residues 73–81 (TDIQNDSYS) are Extracellular-facing. A helical transmembrane segment spans residues 82–101 (WPMLVYMCTSCVYPLASSCA). The Cytoplasmic segment spans residues 102 to 113 (HTFSSMSKNARH). Residues 114 to 134 (ICYFLDYGAVNLFSLGSAIAY) form a helical membrane-spanning segment. The Extracellular portion of the chain corresponds to 135-141 (SAYTFPD). Residues 142–162 (ALVCSTFHECYVALAVLNTIL) traverse the membrane as a helical segment. Residues 163–186 (STGLSCYSRFLELQKPRLCKLLRV) are Cytoplasmic-facing. A helical transmembrane segment spans residues 187 to 207 (LAFAYPYTWDSLPIFYRLFLF). Topologically, residues 208-253 (PGESSRNEAMLYHQKHMGMTLLASFFYSAHLPERLAPGRFDYIGHS) are extracellular. The helical transmembrane segment at 254 to 274 (HQLFHVCVILATHLQMEAILL) threads the bilayer. Topologically, residues 275–294 (DKTLRREWLLATSRPFSFPQ) are cytoplasmic. The chain crosses the membrane as a helical span at residues 295–315 (IAAAMLLCIIFSLSNIIYFSA). Over 316-330 (ALYRIPEPELHEKET) the chain is Extracellular.

This sequence belongs to the ADIPOR family.

It is found in the cell membrane. In terms of biological role, plasma membrane progesterone (P4) receptor coupled to G proteins. Seems to act through a G(i) mediated pathway. May be involved in oocyte maturation. This is Membrane progestin receptor gamma from Mus musculus (Mouse).